The sequence spans 704 residues: Polyribonucleotide nucleotidyltransferase (704 aa).

Residues D488 and D494 each contribute to the Mg(2+) site. A KH domain is found at 555-614; it reads PRITTIKINPEKIRDVIGKGGATIRALTEETGTTIELDDDGTVKIASSNGEATKEAIRRI. The region spanning 624 to 692 is the S1 motif domain; the sequence is GTVYNGKVVR…RQGRVRLSMK (69 aa).

This sequence belongs to the polyribonucleotide nucleotidyltransferase family. Component of the RNA degradosome, which is a multiprotein complex involved in RNA processing and mRNA degradation. Mg(2+) serves as cofactor.

It is found in the cytoplasm. The catalysed reaction is RNA(n+1) + phosphate = RNA(n) + a ribonucleoside 5'-diphosphate. Functionally, involved in mRNA degradation. Catalyzes the phosphorolysis of single-stranded polyribonucleotides processively in the 3'- to 5'-direction. The protein is Polyribonucleotide nucleotidyltransferase of Shewanella halifaxensis (strain HAW-EB4).